Consider the following 247-residue polypeptide: 2,3-bisphosphoglycerate-dependent phosphoglycerate mutase (247 aa).

Residues 8–15 (RHGQSLWN), 21–22 (TG), R60, 87–90 (ERHY), K98, 114–115 (RR), and 183–184 (GN) contribute to the substrate site. H9 (tele-phosphohistidine intermediate) is an active-site residue. E87 acts as the Proton donor/acceptor in catalysis.

It belongs to the phosphoglycerate mutase family. BPG-dependent PGAM subfamily.

The enzyme catalyses (2R)-2-phosphoglycerate = (2R)-3-phosphoglycerate. It participates in carbohydrate degradation; glycolysis; pyruvate from D-glyceraldehyde 3-phosphate: step 3/5. Functionally, catalyzes the interconversion of 2-phosphoglycerate and 3-phosphoglycerate. This is 2,3-bisphosphoglycerate-dependent phosphoglycerate mutase from Hydrogenobaculum sp. (strain Y04AAS1).